We begin with the raw amino-acid sequence, 400 residues long: Lysophospholipid transporter LplT (400 aa).

12 helical membrane passes run 19-39, 53-73, 91-111, 139-159, 164-184, 195-213, 227-247, 257-277, 281-301, 304-324, 352-372, and 373-393; these read VIVAQFLSAFGDNALLFATLA, VLQMVFVGAYILFAPFVGQIA, AGAAGICLGINPFVGYTLVGI, MMEASTIAAILLGSVAGGVLA, IAALVACALAYAGAVAANLFI, SWRLSAMTRSFFSACVVLW, LFWGAGVTLRFLLVLWVPVAL, YLNAMVAVGIVVGAGAAAKLV, TVSRCMPAGILIGVVVAIFSL, ALLPAYALLLLIGMLGGFFVV, NSAMLLMLGLYSLAVLVGVPA, and VAIGIGFGVLFALAIAALWIW.

This sequence belongs to the major facilitator superfamily. LplT (TC 2.A.1.42) family.

The protein localises to the cell inner membrane. In terms of biological role, catalyzes the facilitated diffusion of 2-acyl-glycero-3-phosphoethanolamine (2-acyl-GPE) into the cell. This is Lysophospholipid transporter LplT from Salmonella paratyphi B (strain ATCC BAA-1250 / SPB7).